The chain runs to 598 residues: uncharacterized protein (598 aa).

The span at 1–19 (MSVPLRFSTPSSSPSASDN) shows a compositional bias: low complexity. Disordered regions lie at residues 1–54 (MSVP…MRPK), 139–176 (QKNQ…PNWK), and 194–279 (EAQL…ITMP). Residues 1–313 (MSVPLRFSTP…CKIRHFFREG (313 aa)) are Cytoplasmic-facing. A compositionally biased stretch (polar residues) spans 30–48 (ELDTFNTTDVPRRVNTTKA). Positions 147–165 (RANSRVNSRANSRANSSVS) are enriched in low complexity. Composition is skewed to polar residues over residues 218–242 (FSLQ…SSAI) and 255–276 (PRNN…SQDI). Residues 314–334 (FAEFLGTLVLVVFGVGSNLQA) traverse the membrane as a helical segment. At 335–346 (TVTNGAGGSFES) the chain is on the extracellular side. Residues 347-367 (LSFAWGFGCMLGVYIAGGISG) traverse the membrane as a helical segment. Residues 368-388 (GHVNPAVTISLAIFRKFPWYK) are Cytoplasmic-facing. Positions 371–373 (NPA) match the NPA 1 motif. A helical transmembrane segment spans residues 389–409 (VPIYIFFQIWGAFFGGALAYG). Residues 410 to 444 (YHWSSITEFEGGKDIRTPATGGCLYTNPKPYVTWR) are Extracellular-facing. The helical transmembrane segment at 445–465 (NAFFDEFIGTAVLVGCLFAIL) threads the bilayer. Over 466–473 (DDTNSPPT) the chain is Cytoplasmic. The helical transmembrane segment at 474–494 (QGMTAFIVGLLIAAIGMALGY) threads the bilayer. The Extracellular segment spans residues 495-532 (QTSFTLNPARDLGPRMFAWWIGYGPHSFHLYHWWWTWG). The short motif at 501 to 503 (NPA) is the NPA 2 element. A helical membrane pass occupies residues 533-553 (AWGGTIGGGIAGGLIYDLVIF). Over 554–598 (TGPESPLNYPDNGFIDKKVHQITAKFEKEEEVENLEKTDSPIENN) the chain is Cytoplasmic.

The protein belongs to the MIP/aquaporin (TC 1.A.8) family.

The protein localises to the membrane. This is an uncharacterized protein from Schizosaccharomyces pombe (strain 972 / ATCC 24843) (Fission yeast).